A 469-amino-acid chain; its full sequence is Cysteine--tRNA ligase (469 aa).

Zn(2+) is bound at residue Cys33. Positions 35 to 45 (ATVQGLPHIGH) match the 'HIGH' region motif. Residues Cys211, His236, and Glu240 each coordinate Zn(2+). The 'KMSKS' region motif lies at 267–271 (KMSKS). ATP is bound at residue Lys270.

The protein belongs to the class-I aminoacyl-tRNA synthetase family. As to quaternary structure, monomer. It depends on Zn(2+) as a cofactor.

The protein localises to the cytoplasm. The enzyme catalyses tRNA(Cys) + L-cysteine + ATP = L-cysteinyl-tRNA(Cys) + AMP + diphosphate. This Mycobacterium tuberculosis (strain CDC 1551 / Oshkosh) protein is Cysteine--tRNA ligase (cysS).